Reading from the N-terminus, the 687-residue chain is Carboxysome assembly protein CcmM (687 aa).

The tract at residues 242 to 327 (SINSDITNQI…RVVEVIIQRP (86 aa)) is rbcS-like repeat 1, SSUL1. Disordered regions lie at residues 328–355 (GDVP…SAVA) and 442–476 (VHRP…SSAG). Polar residues predominate over residues 335 to 346 (SRGTTTTKALSS). The segment at 366-445 (ANQLRALLHQ…RVAEIVVHRP (80 aa)) is rbcS-like repeat 2, SSUL2. Low complexity predominate over residues 451–472 (GKPSSSSSSVGYKSAPVSSAGG). A rbcS-like repeat 3, SSUL3 region spans residues 480-562 (PEVIATVRGL…RVLEQIIQRP (83 aa)). The disordered stretch occupies residues 565-590 (NVVAGRSPSSSSASTSSSASSNGFGS). Residues 568–587 (AGRSPSSSSASTSSSASSNG) show a composition bias toward low complexity. The interval 599–687 (SAVRLDNSVV…RVLETIIQRP (89 aa)) is rbcS-like repeat 4, SSUL4.

Belongs to the gamma-class carbonic anhydrase family. As to quaternary structure, probably forms homotrimers. Full length CcmM interacts with CcaA, CcmK1, CcmK2, CcmK4, CcmL, CcmN and itself, while the N-terminus of CcmM (first 249 residues) only interacts with CcaA, CcmM and CcmN. A probable CcmM-CcaA-CcmN complex as well as a CcaA-RuBisCO-CcmM complex can also be isolated. Interacts with full-length CcaA and the first 220 residues of CcaA; surface residues Gln-177 to Gln-188 are responsible in part for binding. Multiple forms of the protein of 73 (full length), 62, 52 (the most predominant form) and 36 kDa are seen even in the presence of protease inhibitors. CcmM52 interacts with CcaA.

It is found in the carboxysome. In terms of biological role, functions as a scaffold protein for the assembly of beta-carboxysomes, initiates carboxysome assembly via its N-terminal domain binding to CcaA, CcmK and CcmL. Binds HCO(3)-, suggesting it may play a role in the activity or regulation of bicarbonate dehydration. Also initiates carboxysome assembly by coalescing RuBisCO (ribulose bisphosphate carboxylase, rbcL-rbcS) via its SSU-like domains. Produced as a full-length and a shorter form; both forms are required for correct carboxysome assembly and growth. Despite its strong similarity to gamma-class carbonic anhydrase (CA) it does not have detectable CA activity. Functionally, beta-carboxysome assembly initiates when soluble RuBisCO is condensed into a liquid matrix in a pre-carboxysome by the RbcS-like domains of probably both forms of CcmM. CcmN interacts with the N-terminus of full length CcmM, and then recruits the shell proteins (CcmK) via CcmN's encapsulation peptide. CcmM73 also interacts with CcmK proteins and CcmL directly. Shell formation requires CcmK proteins and CcmO. CcmL caps the otherwise elongated carboxysome. Once fully encapsulated carboxysomes are formed, they migrate within the cell probably via interactions with the cytoskeleton. This Synechocystis sp. (strain ATCC 27184 / PCC 6803 / Kazusa) protein is Carboxysome assembly protein CcmM.